Reading from the N-terminus, the 140-residue chain is uncharacterized protein (140 aa).

The HTH cro/C1-type domain occupies 26–80 (IRSQRETAHVSMRQLAERSGVSNPYLSQVERGLRKPSADVLSQIAKALRVSAEVL). A DNA-binding region (H-T-H motif) is located at residues 37–56 (MRQLAERSGVSNPYLSQVER).

This is an uncharacterized protein from Mycobacterium tuberculosis (strain ATCC 25618 / H37Rv).